The following is a 224-amino-acid chain: MAQGLIEVERKFAPGPDTEERLQELGATLEHRVTFRDTYYDTSELSLMLSDHWLRQREGSGWELKCPGVTGVSGPHNEYVEVTSEAAIVAQLFELLGSGEQKPAGVAAVLGSLKLQEVASFITTRSSWKLALSGAHGQEPQLTIDLDSADFGYAVGEVEAMVHEKAEVPAALEKIITVSSMLGVPAQEEAPAKLMVYLQRFRPLDYQRLLEAASSGEATGDSAS.

Ala2 is modified (N-acetylalanine). The CYTH domain maps to 5 to 201 (LIEVERKFAP…AKLMVYLQRF (197 aa)). Positions 7 and 9 each coordinate Mg(2+). Substrate-binding residues include Lys11, Arg55, Arg57, Lys65, and Arg125. Mg(2+) contacts are provided by Asp145, Glu157, and Glu159. Residue Glu157 participates in substrate binding. Residue Lys193 participates in substrate binding.

This sequence belongs to the ThTPase family. Monomer. Requires Mg(2+) as cofactor.

It localises to the cytoplasm. The catalysed reaction is thiamine triphosphate + H2O = thiamine diphosphate + phosphate + H(+). Its function is as follows. Hydrolase highly specific for thiamine triphosphate (ThTP). The polypeptide is Thiamine-triphosphatase (Thtpa) (Mus musculus (Mouse)).